The primary structure comprises 374 residues: Dual-specificity RNA methyltransferase RlmN (374 aa).

Residue Glu-91 is the Proton acceptor of the active site. Residues Glu-97–Asp-340 enclose the Radical SAM core domain. A disulfide bond links Cys-104 and Cys-345. [4Fe-4S] cluster contacts are provided by Cys-111, Cys-115, and Cys-118. S-adenosyl-L-methionine is bound by residues Gly-165–Glu-166, Ser-197, Ser-219–His-221, and Asn-302. Cys-345 (S-methylcysteine intermediate) is an active-site residue.

It belongs to the radical SAM superfamily. RlmN family. [4Fe-4S] cluster is required as a cofactor.

It localises to the cytoplasm. The catalysed reaction is adenosine(2503) in 23S rRNA + 2 reduced [2Fe-2S]-[ferredoxin] + 2 S-adenosyl-L-methionine = 2-methyladenosine(2503) in 23S rRNA + 5'-deoxyadenosine + L-methionine + 2 oxidized [2Fe-2S]-[ferredoxin] + S-adenosyl-L-homocysteine. The enzyme catalyses adenosine(37) in tRNA + 2 reduced [2Fe-2S]-[ferredoxin] + 2 S-adenosyl-L-methionine = 2-methyladenosine(37) in tRNA + 5'-deoxyadenosine + L-methionine + 2 oxidized [2Fe-2S]-[ferredoxin] + S-adenosyl-L-homocysteine. Specifically methylates position 2 of adenine 2503 in 23S rRNA and position 2 of adenine 37 in tRNAs. m2A2503 modification seems to play a crucial role in the proofreading step occurring at the peptidyl transferase center and thus would serve to optimize ribosomal fidelity. In Acidovorax sp. (strain JS42), this protein is Dual-specificity RNA methyltransferase RlmN.